The following is a 245-amino-acid chain: MDDARTLLDIKEYPDTEVQKNRVLTLEEWQDKWVSHKIGFHQEQGHKLLKKHLDAFLKGESGLRVFFPLCGKAVEMKWFADRGHSVVGVEISELGIREFFSEQNLSYSEEPITEVPGAKVFKSSAGNISLYCCSIFDLPRVNIGKFDRIWDRGALVAVNPSDRKRYAAVMLSLLRKGFQYLLAVLSYDPTKHAGPPFYVPDAEIKMLFDTKCKIHCLEKVDAFEERHKSWGIDYIFEKLYLLTEK.

Residue 29 to 40 (WQDKWVSHKIGF) coordinates S-adenosyl-L-methionine. Residue Phe-40 participates in substrate binding. Lys-58 bears the N6-acetyllysine mark. S-adenosyl-L-methionine is bound by residues Leu-69, Glu-90, 134-135 (SI), and Arg-152.

It belongs to the class I-like SAM-binding methyltransferase superfamily. TPMT family. As to quaternary structure, monomer.

The protein localises to the cytoplasm. It catalyses the reaction S-adenosyl-L-methionine + a thiopurine = S-adenosyl-L-homocysteine + a thiopurine S-methylether.. In Oryctolagus cuniculus (Rabbit), this protein is Thiopurine S-methyltransferase (TPMT).